Consider the following 362-residue polypeptide: Aminomethyltransferase (362 aa).

Belongs to the GcvT family. The glycine cleavage system is composed of four proteins: P, T, L and H.

The catalysed reaction is N(6)-[(R)-S(8)-aminomethyldihydrolipoyl]-L-lysyl-[protein] + (6S)-5,6,7,8-tetrahydrofolate = N(6)-[(R)-dihydrolipoyl]-L-lysyl-[protein] + (6R)-5,10-methylene-5,6,7,8-tetrahydrofolate + NH4(+). Functionally, the glycine cleavage system catalyzes the degradation of glycine. The polypeptide is Aminomethyltransferase (Colwellia psychrerythraea (strain 34H / ATCC BAA-681) (Vibrio psychroerythus)).